We begin with the raw amino-acid sequence, 544 residues long: MLNMQGAEERDIRRETCPGWVNKNKPALEQDVCKIDSSGIVVKRFQEDEYQDSTFEEKYACEGMKENSPREIAESCLFQEGGFGRITFIHKEAPPEIISQGYNFEKSLLLTSSLVTRLRVSTEESLHQWETSNIQTNDISDQSKCPTLCTQKKSWKCNECGKTFTQSSSLTQHQRTHTGERPYTCEECGKAFSRSSFLVQHQRIHTGVKPYGCEQCGKTFRCRSFLTQHQRIHTGEKPYKCNECGNSFRNHSHLTEHQRIHTGEKPYKCNRCGKAFNQNTHLIHHQRIHTGEKPYICSECGSSFRKHSNLTQHQRIHTGEKPHKCDECGKTFQTKANLSQHQRIHSGEKPYKCKECGKAFCQSPSLIKHQRIHTGEKPYKCKECGKAFTQSTPLTKHQRIHTGERPYKCSECGKAFIQSICLIRHQRSHTGEKPYKCNECGKGFNQNTCLTQHMRIHTGEKPYKCKECGKAFAHSSSLTEHHRTHTGEKLYKCSECEKTFRKYAHLSEHYRIHTGEKPYECIECGKFFRHSSVLFRHQKLHSGD.

Lysine 43 participates in a covalent cross-link: Glycyl lysine isopeptide (Lys-Gly) (interchain with G-Cter in SUMO2). 14 C2H2-type zinc fingers span residues 155–177 (WKCN…QRTH), 183–205 (YTCE…QRIH), 211–233 (YGCE…QRIH), 239–261 (YKCN…QRIH), 267–289 (YKCN…QRIH), 295–317 (YICS…QRIH), 323–345 (HKCD…QRIH), 351–373 (YKCK…QRIH), 379–401 (YKCK…QRIH), 407–429 (YKCS…QRSH), 435–457 (YKCN…MRIH), 463–485 (YKCK…HRTH), 491–513 (YKCS…YRIH), and 519–541 (YECI…QKLH).

It belongs to the krueppel C2H2-type zinc-finger protein family. In terms of assembly, (Microbial infection) Interacts with human respiratory syncytial virus (HRSV) matrix protein; this interaction probably facilitates viral release.

The protein localises to the nucleus. In terms of biological role, may be involved in transcriptional regulation. This Homo sapiens (Human) protein is Zinc finger protein 502 (ZNF502).